We begin with the raw amino-acid sequence, 316 residues long: HPr kinase/phosphorylase (316 aa).

Active-site residues include His-143 and Lys-164. ATP is bound at residue 158 to 165 (GEAGSGKS). Ser-165 is a binding site for Mg(2+). Asp-182 (proton acceptor; for phosphorylation activity. Proton donor; for dephosphorylation activity) is an active-site residue. Residues 206–215 (LEVRGLGVLN) are important for the catalytic mechanism of both phosphorylation and dephosphorylation. Glu-207 provides a ligand contact to Mg(2+). Arg-251 is a catalytic residue. The interval 272–277 (PVMPGR) is important for the catalytic mechanism of dephosphorylation.

The protein belongs to the HPrK/P family. In terms of assembly, homohexamer. It depends on Mg(2+) as a cofactor.

The enzyme catalyses [HPr protein]-L-serine + ATP = [HPr protein]-O-phospho-L-serine + ADP + H(+). The catalysed reaction is [HPr protein]-O-phospho-L-serine + phosphate + H(+) = [HPr protein]-L-serine + diphosphate. Catalyzes the ATP- as well as the pyrophosphate-dependent phosphorylation of a specific serine residue in HPr, a phosphocarrier protein of the phosphoenolpyruvate-dependent sugar phosphotransferase system (PTS). HprK/P also catalyzes the pyrophosphate-producing, inorganic phosphate-dependent dephosphorylation (phosphorolysis) of seryl-phosphorylated HPr (P-Ser-HPr). The chain is HPr kinase/phosphorylase from Xanthomonas euvesicatoria pv. vesicatoria (strain 85-10) (Xanthomonas campestris pv. vesicatoria).